The following is a 360-amino-acid chain: Ferredoxin--NADP reductase 1 (360 aa).

The FAD site is built by Asp43, Gln51, Tyr56, Ala96, Phe141, Asp307, and Ser348.

The protein belongs to the ferredoxin--NADP reductase type 2 family. In terms of assembly, homodimer. The cofactor is FAD.

The catalysed reaction is 2 reduced [2Fe-2S]-[ferredoxin] + NADP(+) + H(+) = 2 oxidized [2Fe-2S]-[ferredoxin] + NADPH. The polypeptide is Ferredoxin--NADP reductase 1 (Cupriavidus taiwanensis (strain DSM 17343 / BCRC 17206 / CCUG 44338 / CIP 107171 / LMG 19424 / R1) (Ralstonia taiwanensis (strain LMG 19424))).